Reading from the N-terminus, the 112-residue chain is Secretoglobin family 2B member 20 (112 aa).

Positions 1–23 are cleaved as a signal peptide; it reads MKGTLLLLGLLVTGELSFQTTEA. Residue Asn-50 is glycosylated (N-linked (GlcNAc...) asparagine).

It belongs to the secretoglobin family. As to expression, expressed in lacrimal gland, at higher level in males than females. Expressed in the submandibular gland.

It is found in the secreted. The polypeptide is Secretoglobin family 2B member 20 (Scgb2b20) (Mus musculus (Mouse)).